A 579-amino-acid chain; its full sequence is Rop guanine nucleotide exchange factor 6 (579 aa).

The span at 31–61 (ESTTDSSLSSSSSGVGSSSGRSSVAERSVSS) shows a compositional bias: low complexity. Residues 31–89 (ESTTDSSLSSSSSGVGSSSGRSSVAERSVSSPPTKSQILGWPLGQGSWRKSSGKMKKKT) form a disordered region. Residues 98–479 (FKRVGTETSE…DISKDDGDGD (382 aa)) enclose the PRONE domain.

Its function is as follows. Guanine-nucleotide exchange factor (GEF) that acts as an activator of Rop (Rho of plants) GTPases by promoting the exchange of GDP for GTP. The protein is Rop guanine nucleotide exchange factor 6 (ROPGEF6) of Arabidopsis thaliana (Mouse-ear cress).